The chain runs to 516 residues: Delta(24)-sterol reductase (516 aa).

A signal peptide spans 1–22 (MEPAVSLAVCALLFLLWVRVKG). At 23–31 (LEFVLIHQR) the chain is on the lumenal side. The chain crosses the membrane as a helical span at residues 32–52 (WVFVCLFLLPLSLIFDIYYYV). The Cytoplasmic portion of the chain corresponds to 53 to 516 (RAWVVFKLSS…YDKICKAARH (464 aa)). In terms of domain architecture, FAD-binding PCMH-type spans 58–234 (FKLSSAPRLH…VAAEIRIIPA (177 aa)). Residue 163–175 (TVGGLIMGTGIES) participates in FAD binding.

The protein belongs to the FAD-binding oxidoreductase/transferase type 4 family. Interacts with DHCR7; this interaction regulates DHCR7 activity. It depends on FAD as a cofactor.

The protein localises to the endoplasmic reticulum membrane. It is found in the golgi apparatus membrane. The enzyme catalyses cholesterol + NADP(+) = desmosterol + NADPH + H(+). The catalysed reaction is lanosterol + NADPH + H(+) = 24,25-dihydrolanosterol + NADP(+). It carries out the reaction 5alpha-cholest-8-en-3beta-ol + NADP(+) = zymosterol + NADPH + H(+). Its pathway is steroid biosynthesis; cholesterol biosynthesis. Its function is as follows. Catalyzes the reduction of the delta-24 double bond of sterol intermediates during cholesterol biosynthesis. In addition to its cholesterol-synthesizing activity, can protect cells from oxidative stress by reducing caspase 3 activity during apoptosis induced by oxidative stress. Also protects against amyloid-beta peptide-induced apoptosis. The polypeptide is Delta(24)-sterol reductase (DHCR24) (Macaca fascicularis (Crab-eating macaque)).